Consider the following 273-residue polypeptide: Undecaprenyl-diphosphatase (273 aa).

The next 8 helical transmembrane spans lie at 13 to 35 (GLVEGFTEFLPISSTGHLIVFGN), 45 to 62 (VFEIAIQLGAVLAVVFEY), 82 to 102 (FVLNLAIAFIPAAVMGLLFGK), 108 to 128 (LFNPLSVAVMLVLGGLFILWV), 144 to 164 (ALRPIDALMIGVAQVFALIPG), 186 to 206 (TEFSFFLAVPMMVAATAYDVL), 219 to 239 (LILIGFVAAFVSGLVAVKALL), and 250 to 270 (FAYYRIVFGIAIIILWLSGWI).

The protein belongs to the UppP family.

It is found in the cell inner membrane. It carries out the reaction di-trans,octa-cis-undecaprenyl diphosphate + H2O = di-trans,octa-cis-undecaprenyl phosphate + phosphate + H(+). In terms of biological role, catalyzes the dephosphorylation of undecaprenyl diphosphate (UPP). Confers resistance to bacitracin. The chain is Undecaprenyl-diphosphatase from Neisseria meningitidis serogroup C (strain 053442).